The chain runs to 71 residues: Large ribosomal subunit protein uL29 (71 aa).

The protein belongs to the universal ribosomal protein uL29 family.

The sequence is that of Large ribosomal subunit protein uL29 from Methanococcus maripaludis (strain C7 / ATCC BAA-1331).